We begin with the raw amino-acid sequence, 148 residues long: Ribonuclease H (148 aa).

One can recognise an RNase H type-1 domain in the interval 1 to 142; sequence MSDSVELYTD…ADQLANRGVD (142 aa). The Mg(2+) site is built by Asp10, Glu48, Asp70, and Asp134. Residues 129–148 form a disordered region; the sequence is GNERADQLANRGVDEVRAKR.

It belongs to the RNase H family. In terms of assembly, monomer. Requires Mg(2+) as cofactor.

It is found in the cytoplasm. It carries out the reaction Endonucleolytic cleavage to 5'-phosphomonoester.. Its function is as follows. Endonuclease that specifically degrades the RNA of RNA-DNA hybrids. This chain is Ribonuclease H, found in Pseudomonas putida (strain W619).